Here is a 259-residue protein sequence, read N- to C-terminus: Thiazole synthase (259 aa).

Residue Lys-98 is the Schiff-base intermediate with DXP of the active site. 1-deoxy-D-xylulose 5-phosphate contacts are provided by residues Gly-159, 185-186, and 207-208; these read AG and NS.

It belongs to the ThiG family. Homotetramer. Forms heterodimers with either ThiH or ThiS.

The protein localises to the cytoplasm. The enzyme catalyses [ThiS sulfur-carrier protein]-C-terminal-Gly-aminoethanethioate + 2-iminoacetate + 1-deoxy-D-xylulose 5-phosphate = [ThiS sulfur-carrier protein]-C-terminal Gly-Gly + 2-[(2R,5Z)-2-carboxy-4-methylthiazol-5(2H)-ylidene]ethyl phosphate + 2 H2O + H(+). It participates in cofactor biosynthesis; thiamine diphosphate biosynthesis. Its function is as follows. Catalyzes the rearrangement of 1-deoxy-D-xylulose 5-phosphate (DXP) to produce the thiazole phosphate moiety of thiamine. Sulfur is provided by the thiocarboxylate moiety of the carrier protein ThiS. In vitro, sulfur can be provided by H(2)S. This is Thiazole synthase from Chlorobium phaeobacteroides (strain DSM 266 / SMG 266 / 2430).